Here is a 216-residue protein sequence, read N- to C-terminus: Guanylate kinase (216 aa).

The region spanning 12-191 is the Guanylate kinase-like domain; that stretch reads GLLFVISSPS…CVKQVKNILT (180 aa). ATP is bound at residue 19–26; it reads SPSGAGKS.

This sequence belongs to the guanylate kinase family.

It is found in the cytoplasm. The enzyme catalyses GMP + ATP = GDP + ADP. Functionally, essential for recycling GMP and indirectly, cGMP. The chain is Guanylate kinase from Zymomonas mobilis subsp. mobilis (strain ATCC 31821 / ZM4 / CP4).